A 245-amino-acid chain; its full sequence is DNA polymerase sliding clamp (245 aa).

The protein belongs to the PCNA family. Homotrimer. The subunits circularize to form a toroid; DNA passes through its center. Replication factor C (RFC) is required to load the toroid on the DNA.

Its function is as follows. Sliding clamp subunit that acts as a moving platform for DNA processing. Responsible for tethering the catalytic subunit of DNA polymerase and other proteins to DNA during high-speed replication. This Methanosarcina mazei (strain ATCC BAA-159 / DSM 3647 / Goe1 / Go1 / JCM 11833 / OCM 88) (Methanosarcina frisia) protein is DNA polymerase sliding clamp.